The chain runs to 795 residues: Phenylalanine--tRNA ligase beta subunit (795 aa).

The region spanning 39–148 (AAKFNGVLVG…SDAPVGTDLR (110 aa)) is the tRNA-binding domain. Residues 401-476 (PKVTEVRLRR…RVYGYNSIPN (76 aa)) form the B5 domain. 4 residues coordinate Mg(2+): D454, D460, E463, and E464. Positions 701–794 (SKFPSNRRDI…LAEQFNASLR (94 aa)) constitute an FDX-ACB domain.

It belongs to the phenylalanyl-tRNA synthetase beta subunit family. Type 1 subfamily. In terms of assembly, tetramer of two alpha and two beta subunits. Mg(2+) is required as a cofactor.

It is found in the cytoplasm. It carries out the reaction tRNA(Phe) + L-phenylalanine + ATP = L-phenylalanyl-tRNA(Phe) + AMP + diphosphate + H(+). This chain is Phenylalanine--tRNA ligase beta subunit, found in Pseudoalteromonas translucida (strain TAC 125).